We begin with the raw amino-acid sequence, 238 residues long: ATP synthase subunit a (238 aa).

Transmembrane regions (helical) follow at residues 17 to 37, 80 to 100, 112 to 132, and 194 to 214; these read LSNI…AIIC, ITLL…QIAI, DPIV…YYGI, and IFVG…SIFI.

The protein belongs to the ATPase A chain family. F-type ATPases have 2 components, CF(1) - the catalytic core - and CF(0) - the membrane proton channel. CF(1) has five subunits: alpha(3), beta(3), gamma(1), delta(1), epsilon(1). CF(0) has three main subunits: a(1), b(2) and c(9-12). The alpha and beta chains form an alternating ring which encloses part of the gamma chain. CF(1) is attached to CF(0) by a central stalk formed by the gamma and epsilon chains, while a peripheral stalk is formed by the delta and b chains.

Its subcellular location is the cell membrane. Key component of the proton channel; it plays a direct role in the translocation of protons across the membrane. The polypeptide is ATP synthase subunit a (Listeria innocua serovar 6a (strain ATCC BAA-680 / CLIP 11262)).